Consider the following 105-residue polypeptide: Mini zinc finger protein 1 (105 aa).

The interval 1–29 (MGPQQDRSAAKPYANGSTAAAAAAGRKEN) is disordered. Residues 35 to 84 (YRECQRNHAASIGGHAVDGCREFMASGAEGTAAALLCAACGCHRSFHRRE) form a ZF-HD dimerization-type; degenerate zinc finger.

In terms of assembly, homo- and heterodimers.

The protein resides in the cytoplasm. In terms of biological role, inhibits zinc finger homeodomain (ZHD) transcription factors, by interacting with them to prevent both their nuclear localization and their DNA-binding properties. The sequence is that of Mini zinc finger protein 1 (MIF1) from Oryza sativa subsp. indica (Rice).